The primary structure comprises 600 residues: NADH-quinone oxidoreductase subunit C/D (600 aa).

Positions 1-190 are NADH dehydrogenase I subunit C; it reads MVNNMTDLTA…DPFELTKAKQ (190 aa). The NADH dehydrogenase I subunit D stretch occupies residues 214–600; sequence DFMFLNLGPN…IDFVMSDVDR (387 aa).

It in the N-terminal section; belongs to the complex I 30 kDa subunit family. In the C-terminal section; belongs to the complex I 49 kDa subunit family. NDH-1 is composed of 13 different subunits. Subunits NuoB, CD, E, F, and G constitute the peripheral sector of the complex.

It is found in the cell inner membrane. The enzyme catalyses a quinone + NADH + 5 H(+)(in) = a quinol + NAD(+) + 4 H(+)(out). NDH-1 shuttles electrons from NADH, via FMN and iron-sulfur (Fe-S) centers, to quinones in the respiratory chain. The immediate electron acceptor for the enzyme in this species is believed to be ubiquinone. Couples the redox reaction to proton translocation (for every two electrons transferred, four hydrogen ions are translocated across the cytoplasmic membrane), and thus conserves the redox energy in a proton gradient. This Salmonella arizonae (strain ATCC BAA-731 / CDC346-86 / RSK2980) protein is NADH-quinone oxidoreductase subunit C/D.